We begin with the raw amino-acid sequence, 284 residues long: Nucleoid occlusion protein (284 aa).

The segment at residues 143 to 162 is a DNA-binding region (H-T-H motif); that stretch reads EALAQRVGKSQSAIANKMRL.

Belongs to the ParB family.

It is found in the cytoplasm. The protein resides in the nucleoid. Its function is as follows. Effects nucleoid occlusion by binding relatively nonspecifically to DNA and preventing the assembly of the division machinery in the vicinity of the nucleoid, especially under conditions that disturb the cell cycle. It helps to coordinate cell division and chromosome segregation by preventing the formation of the Z ring through the nucleoid, which would cause chromosome breakage. This Listeria innocua serovar 6a (strain ATCC BAA-680 / CLIP 11262) protein is Nucleoid occlusion protein.